Consider the following 346-residue polypeptide: Tetraacyldisaccharide 4'-kinase (346 aa).

54 to 61 (TVGGAGKT) lines the ATP pocket.

Belongs to the LpxK family.

The enzyme catalyses a lipid A disaccharide + ATP = a lipid IVA + ADP + H(+). It functions in the pathway glycolipid biosynthesis; lipid IV(A) biosynthesis; lipid IV(A) from (3R)-3-hydroxytetradecanoyl-[acyl-carrier-protein] and UDP-N-acetyl-alpha-D-glucosamine: step 6/6. Its function is as follows. Transfers the gamma-phosphate of ATP to the 4'-position of a tetraacyldisaccharide 1-phosphate intermediate (termed DS-1-P) to form tetraacyldisaccharide 1,4'-bis-phosphate (lipid IVA). This is Tetraacyldisaccharide 4'-kinase from Rhizobium meliloti (strain 1021) (Ensifer meliloti).